Reading from the N-terminus, the 495-residue chain is Glycerol kinase (495 aa).

Residue Thr-11 coordinates ADP. Residues Thr-11, Thr-12, and Ser-13 each contribute to the ATP site. Thr-11 is a sn-glycerol 3-phosphate binding site. Residues Arg-81, Glu-82, Tyr-133, and Asp-242 each contribute to the sn-glycerol 3-phosphate site. Residues Arg-81, Glu-82, Tyr-133, Asp-242, and Gln-243 each contribute to the glycerol site. 4 residues coordinate ADP: Thr-264, Gly-307, Gly-407, and Asn-411. ATP is bound by residues Thr-264, Gly-307, and Gly-407.

It belongs to the FGGY kinase family.

The catalysed reaction is glycerol + ATP = sn-glycerol 3-phosphate + ADP + H(+). It participates in polyol metabolism; glycerol degradation via glycerol kinase pathway; sn-glycerol 3-phosphate from glycerol: step 1/1. With respect to regulation, inhibited by fructose 1,6-bisphosphate (FBP). Functionally, key enzyme in the regulation of glycerol uptake and metabolism. Catalyzes the phosphorylation of glycerol to yield sn-glycerol 3-phosphate. The sequence is that of Glycerol kinase from Thermus brockianus.